A 236-amino-acid polypeptide reads, in one-letter code: LexA repressor (236 aa).

Residues 26–46 (FDEMKDALDLRSKSGIHRLIT) constitute a DNA-binding region (H-T-H motif). A disordered region spans residues 85 to 109 (PSVIEGNLGKVRPPSPTPAEDDHDR). Residues serine 157 and lysine 195 each act as for autocatalytic cleavage activity in the active site.

Belongs to the peptidase S24 family. In terms of assembly, homodimer.

It carries out the reaction Hydrolysis of Ala-|-Gly bond in repressor LexA.. Its function is as follows. Represses a number of genes involved in the response to DNA damage (SOS response), including recA and lexA. In the presence of single-stranded DNA, RecA interacts with LexA causing an autocatalytic cleavage which disrupts the DNA-binding part of LexA, leading to derepression of the SOS regulon and eventually DNA repair. In Rhodopseudomonas palustris (strain ATCC BAA-98 / CGA009), this protein is LexA repressor.